A 306-amino-acid chain; its full sequence is Aspartate carbamoyltransferase catalytic subunit (306 aa).

Carbamoyl phosphate contacts are provided by arginine 55 and threonine 56. Lysine 84 serves as a coordination point for L-aspartate. Residues arginine 105, histidine 133, and glutamine 136 each coordinate carbamoyl phosphate. Arginine 166 and arginine 227 together coordinate L-aspartate. Leucine 265 and proline 266 together coordinate carbamoyl phosphate.

Belongs to the aspartate/ornithine carbamoyltransferase superfamily. ATCase family. Heterododecamer (2C3:3R2) of six catalytic PyrB chains organized as two trimers (C3), and six regulatory PyrI chains organized as three dimers (R2).

It carries out the reaction carbamoyl phosphate + L-aspartate = N-carbamoyl-L-aspartate + phosphate + H(+). It participates in pyrimidine metabolism; UMP biosynthesis via de novo pathway; (S)-dihydroorotate from bicarbonate: step 2/3. Catalyzes the condensation of carbamoyl phosphate and aspartate to form carbamoyl aspartate and inorganic phosphate, the committed step in the de novo pyrimidine nucleotide biosynthesis pathway. The sequence is that of Aspartate carbamoyltransferase catalytic subunit from Neisseria meningitidis serogroup C (strain 053442).